Here is a 576-residue protein sequence, read N- to C-terminus: Proline--tRNA ligase (576 aa).

This sequence belongs to the class-II aminoacyl-tRNA synthetase family. ProS type 1 subfamily. In terms of assembly, homodimer.

The protein resides in the cytoplasm. The catalysed reaction is tRNA(Pro) + L-proline + ATP = L-prolyl-tRNA(Pro) + AMP + diphosphate. Functionally, catalyzes the attachment of proline to tRNA(Pro) in a two-step reaction: proline is first activated by ATP to form Pro-AMP and then transferred to the acceptor end of tRNA(Pro). As ProRS can inadvertently accommodate and process non-cognate amino acids such as alanine and cysteine, to avoid such errors it has two additional distinct editing activities against alanine. One activity is designated as 'pretransfer' editing and involves the tRNA(Pro)-independent hydrolysis of activated Ala-AMP. The other activity is designated 'posttransfer' editing and involves deacylation of mischarged Ala-tRNA(Pro). The misacylated Cys-tRNA(Pro) is not edited by ProRS. The protein is Proline--tRNA ligase of Leptospira borgpetersenii serovar Hardjo-bovis (strain JB197).